We begin with the raw amino-acid sequence, 911 residues long: Viral IRF4-like protein (911 aa).

A DNA-binding region (IRF tryptophan pentad repeat) is located at residues 7–114 (SEWATLWIID…GSYVVWQLVR (108 aa)). Disordered stretches follow at residues 147-184 (TTATRRSDTREQSYEEAGAAAPAPPKAPSGLRGRPRKS), 211-302 (ASTS…SRLP), 494-537 (GGAP…PYVC), and 681-727 (ELQE…FFDP). Low complexity predominate over residues 211–221 (ASTSGMGSSGT). Composition is skewed to polar residues over residues 222–231 (RQVTQASSFT) and 495–505 (GAPNQGLSHTQ). Residues 697–710 (RRPRSRSPHGRRTP) are compositionally biased toward basic residues.

This sequence belongs to the IRF family. Interacts with host MDM2; this interaction facilitates the proteasomal degradation of TP53/p53. Interacts with host IRF7; this interaction prevents IRF7 dimerization and subsequent activation.

The protein resides in the host nucleus. In terms of biological role, plays a role in host cell apoptosis modulation by promoting TP53/p53 ubiquitination and subsequent degradation and thus down-regulating TP53/p53-mediated apoptosis. Works as a potential viral transcription factor to modulate host gene expression to build favorable environments for the viral lytic life cycle and greatly accelerates the induction of an immediate early gene RTA, early genes ORF36 and ORF57, late genes ORF25 and ORF64, and latent genes LANA1 and v-IRF3. Inhibits host interferon-alpha production by interacting with host IRF7 and preventing IRF7 dimerization. The protein is Viral IRF4-like protein (vIRF-4) of Homo sapiens (Human).